The primary structure comprises 50 residues: Sperm protamine P1 (50 aa).

This sequence belongs to the protamine P1 family. As to quaternary structure, cross-linked by interchain disulfide bonds around the DNA-helix. In terms of tissue distribution, testis.

It localises to the nucleus. The protein localises to the chromosome. Functionally, protamines substitute for histones in the chromatin of sperm during the haploid phase of spermatogenesis. They compact sperm DNA into a highly condensed, stable and inactive complex. This is Sperm protamine P1 (PRM1) from Pan paniscus (Pygmy chimpanzee).